The primary structure comprises 244 residues: 7-cyano-7-deazaguanine synthase (244 aa).

14–24 is a binding site for ATP; it reads FSGGQDSATCV. Residues Cys-202, Cys-217, Cys-220, and Cys-223 each contribute to the Zn(2+) site.

Belongs to the QueC family. Zn(2+) is required as a cofactor.

The catalysed reaction is 7-carboxy-7-deazaguanine + NH4(+) + ATP = 7-cyano-7-deazaguanine + ADP + phosphate + H2O + H(+). Its pathway is purine metabolism; 7-cyano-7-deazaguanine biosynthesis. In terms of biological role, catalyzes the ATP-dependent conversion of 7-carboxy-7-deazaguanine (CDG) to 7-cyano-7-deazaguanine (preQ(0)). This Burkholderia mallei (strain NCTC 10229) protein is 7-cyano-7-deazaguanine synthase.